The primary structure comprises 320 residues: Protein PXR1 (320 aa).

The span at 1-11 (MGLAGPRKRTK) shows a compositional bias: basic residues. Positions 1 to 24 (MGLAGPRKRTKISHDPNNTAWSRS) are disordered. A compositionally biased stretch (polar residues) spans 15 to 24 (DPNNTAWSRS). Residues 25-79 (TSGYGHKIMSAQGWTPGSFLGASNAAHADHFTAGSAGHIRVILKDDNLGLGAKLR) form the G-patch domain. A disordered region spans residues 152-298 (GEEVQTPQIS…MGRQFTRGRH (147 aa)). Residues 169–182 (KRPKKARKKEKRRA) show a composition bias toward basic residues. Composition is skewed to basic and acidic residues over residues 203-214 (RKENKEKKKSSD), 243-256 (KDPEPSNTEVHDDS), and 269-288 (QESRYSAKNESIRKIREHRP).

Belongs to the PINX1 family.

The protein localises to the nucleus. It is found in the nucleolus. Involved in rRNA-processing at A0, A1 and A2 sites and negatively regulates telomerase. The sequence is that of Protein PXR1 (PXR1) from Ajellomyces capsulatus (strain NAm1 / WU24) (Darling's disease fungus).